A 271-amino-acid chain; its full sequence is Shikimate dehydrogenase (NADP(+)) (271 aa).

Shikimate contacts are provided by residues 14 to 16 (SRS) and threonine 61. The active-site Proton acceptor is the lysine 65. Shikimate contacts are provided by asparagine 86 and aspartate 102. NADP(+) is bound by residues 126 to 130 (GAGGA), 149 to 154 (NRTFSR), and methionine 213. Shikimate is bound at residue tyrosine 215. Glycine 238 is a binding site for NADP(+).

This sequence belongs to the shikimate dehydrogenase family. In terms of assembly, homodimer.

The catalysed reaction is shikimate + NADP(+) = 3-dehydroshikimate + NADPH + H(+). It participates in metabolic intermediate biosynthesis; chorismate biosynthesis; chorismate from D-erythrose 4-phosphate and phosphoenolpyruvate: step 4/7. In terms of biological role, involved in the biosynthesis of the chorismate, which leads to the biosynthesis of aromatic amino acids. Catalyzes the reversible NADPH linked reduction of 3-dehydroshikimate (DHSA) to yield shikimate (SA). This Histophilus somni (strain 129Pt) (Haemophilus somnus) protein is Shikimate dehydrogenase (NADP(+)).